Reading from the N-terminus, the 58-residue chain is MSYYVCVQLVNDVCHEWAERSDLLSLPEGSGLQIGGMLLLLSATAWGIQQIARLLLNR.

The polypeptide is 6.4 kDa protein (Pseudomonas phage Pf3 (Bacteriophage Pf3)).